The chain runs to 379 residues: Putative cysteine desulfurase IscS 1 (379 aa).

Pyridoxal 5'-phosphate is bound by residues 71-72 (GT), N151, Q179, and 199-201 (SGH). K202 is subject to N6-(pyridoxal phosphate)lysine. T237 contributes to the pyridoxal 5'-phosphate binding site. The active-site Cysteine persulfide intermediate is the C325. A [2Fe-2S] cluster-binding site is contributed by C325.

It belongs to the class-V pyridoxal-phosphate-dependent aminotransferase family. NifS/IscS subfamily. Requires pyridoxal 5'-phosphate as cofactor.

It carries out the reaction (sulfur carrier)-H + L-cysteine = (sulfur carrier)-SH + L-alanine. Catalyzes the removal of elemental sulfur from cysteine to produce alanine. This is Putative cysteine desulfurase IscS 1 (iscS1) from Bacillus subtilis (strain 168).